A 362-amino-acid polypeptide reads, in one-letter code: Dihydroorotate dehydrogenase (quinone) (362 aa).

Residues 62–66 and T86 contribute to the FMN site; that span reads AGYDK. Residue K66 coordinates substrate. 111 to 115 provides a ligand contact to substrate; it reads NRLGF. FMN contacts are provided by N139 and N170. Substrate is bound at residue N170. S173 functions as the Nucleophile in the catalytic mechanism. A substrate-binding site is contributed by N175. K215 and S243 together coordinate FMN. 244-245 is a substrate binding site; the sequence is NT. FMN is bound by residues G266, G295, and 316–317; that span reads YS.

It belongs to the dihydroorotate dehydrogenase family. Type 2 subfamily. In terms of assembly, monomer. FMN is required as a cofactor.

Its subcellular location is the cell membrane. The enzyme catalyses (S)-dihydroorotate + a quinone = orotate + a quinol. Its pathway is pyrimidine metabolism; UMP biosynthesis via de novo pathway; orotate from (S)-dihydroorotate (quinone route): step 1/1. Catalyzes the conversion of dihydroorotate to orotate with quinone as electron acceptor. This chain is Dihydroorotate dehydrogenase (quinone), found in Sinorhizobium fredii (strain NBRC 101917 / NGR234).